The chain runs to 175 residues: Ribosome maturation factor RimM (175 aa).

One can recognise a PRC barrel domain in the interval 100–173; sequence EGEYYFHEII…TIIIRPMEGL (74 aa).

This sequence belongs to the RimM family. Binds ribosomal protein uS19.

The protein localises to the cytoplasm. In terms of biological role, an accessory protein needed during the final step in the assembly of 30S ribosomal subunit, possibly for assembly of the head region. Essential for efficient processing of 16S rRNA. May be needed both before and after RbfA during the maturation of 16S rRNA. It has affinity for free ribosomal 30S subunits but not for 70S ribosomes. In Geobacillus kaustophilus (strain HTA426), this protein is Ribosome maturation factor RimM.